We begin with the raw amino-acid sequence, 223 residues long: 7-cyano-7-deazaguanine synthase (223 aa).

8–18 (MSGGMDSTLCA) lines the ATP pocket. Residues cysteine 187, cysteine 195, cysteine 198, and cysteine 201 each coordinate Zn(2+).

The protein belongs to the QueC family. Zn(2+) is required as a cofactor.

The catalysed reaction is 7-carboxy-7-deazaguanine + NH4(+) + ATP = 7-cyano-7-deazaguanine + ADP + phosphate + H2O + H(+). It functions in the pathway purine metabolism; 7-cyano-7-deazaguanine biosynthesis. Its function is as follows. Catalyzes the ATP-dependent conversion of 7-carboxy-7-deazaguanine (CDG) to 7-cyano-7-deazaguanine (preQ(0)). This chain is 7-cyano-7-deazaguanine synthase, found in Campylobacter curvus (strain 525.92).